The following is a 2278-amino-acid chain: Genome polyprotein (2278 aa).

The 156-residue stretch at 454 to 609 (LESTANSIRS…EDWKKKNPGK (156 aa)) folds into the SF3 helicase domain. 481–488 (GPPGIGKT) contributes to the ATP binding site. Residues 939–958 (EEAKGKTKHGRGAKHARRGG) are disordered. Residues 944–956 (KTKHGRGAKHARR) are compositionally biased toward basic residues. Y966 carries the post-translational modification O-(5'-phospho-RNA)-tyrosine. The region spanning 1056–1204 (APTPIVTFTS…TKLAQRVTKT (149 aa)) is the Peptidase C24 domain. Active-site for 3CLpro activity residues include H1086, E1107, and C1171. The 126-residue stretch at 1443-1568 (GVLYCLDYSK…SVCPATASIF (126 aa)) folds into the RdRp catalytic domain.

As to quaternary structure, homodimer. Homomultimer. In terms of processing, specific enzymatic cleavages in vivo yield mature proteins. Pro-Pol is first autocatalytically cleaved, then processes the whole polyprotein. Post-translationally, VPg is uridylylated by the polymerase and is covalently attached to the 5'-end of the polyadenylated genomic and subgenomic RNAs. This uridylylated form acts as a nucleotide-peptide primer for the polymerase.

It localises to the virion. The protein localises to the host cytoplasm. It catalyses the reaction a ribonucleoside 5'-triphosphate + H2O = a ribonucleoside 5'-diphosphate + phosphate + H(+). The catalysed reaction is RNA(n) + a ribonucleoside 5'-triphosphate = RNA(n+1) + diphosphate. It carries out the reaction Endopeptidase with a preference for cleavage when the P1 position is occupied by Glu-|-Xaa and the P1' position is occupied by Gly-|-Yaa.. Together with NTPase and NS4, initiates the formation of the replication complex. Induces the proliferation of the host smooth ER membranes forming long tubular structures. These remodeled membranes probably form the viral factories that contain the replication complex. Functionally, displays NTPase activity, but no helicase activity. Induces the formation of convoluted membranes derived from the host ER. These remodeled membranes probably form the viral factories that contain the replication complex. Together with NS2 and NS4, initiates the formation of the replication complex. Its function is as follows. Probable key protein responsible for the formation of membrane alterations by the virus. Induces the formation of convoluted membranes derived from the host ER. These remodeled membranes probably form the viral factories that contain the replication complex. Together with NS2 and NTPase, initiates the formation of the replication complex. In terms of biological role, viral genome-linked protein is covalently linked to the 5'-end of the positive-strand, negative-strand genomic RNAs and subgenomic RNA. Acts as a genome-linked replication primer. May recruit ribosome to viral RNA thereby promoting viral proteins translation. Interacts with host translation initiation complex to allow the translation of viral proteins. Protease-polymerase p76 processes the polyprotein: Pro-Pol is first released by autocleavage, then all other proteins are cleaved. Cleaves host translation initiation factor eIF4G1, eIF4G2 and PABP1 thereby inducing a shutdown of host protein synthesis. This shutdown may not prevent viral mRNA from being translated since viral Vpg replaces the cap. It is also an RNA-directed RNA polymerase which replicates genomic and antigenomic viral RNA by recognizing specific signals. Also transcribes a subgenomic mRNA by initiating RNA synthesis internally on antigenomic RNA. This sgRNA codes for structural proteins. Catalyzes the covalent attachment VPg with viral RNAs. Functionally, capsid protein self assembles to form an icosahedral capsid with a T=3 symmetry, about 38 nm in diameter, and consisting of 180 capsid proteins. The capsid encapsulate the genomic RNA and VP2 proteins. Attaches virion to target cells, inducing endocytosis of the viral particle. Acidification of the endosome induces conformational change of capsid protein thereby injecting virus genomic RNA into host cytoplasm. The protein is Genome polyprotein of Homo sapiens (Human).